A 324-amino-acid polypeptide reads, in one-letter code: Short chain dehydrogenase/reductase dmxR8 (324 aa).

Residues Leu-33, Lys-58, Asp-83, and Asn-110 each contribute to the NADP(+) site. Ser-163 serves as the catalytic Proton donor. Residues Tyr-200 and Lys-204 each contribute to the NADP(+) site. The active-site Proton acceptor is Tyr-200. Lys-204 functions as the Lowers pKa of active site Tyr in the catalytic mechanism.

Belongs to the short-chain dehydrogenases/reductases (SDR) family.

The protein operates within secondary metabolite biosynthesis. Short chain dehydrogenase; part of the gene cluster that mediates the biosynthesis of the dimeric xanthones cryptosporioptides. The pathway begins with the synthesis of atrochrysone thioester by the polyketide synthase dmx-nrPKS. The atrochrysone carboxyl ACP thioesterase dmxR1 then breaks the thioester bond and releases the atrochrysone carboxylic acid from dmx-nrPKS. Atrochrysone carboxylic acid is decarboxylated by the decarboxylase dmxR15, and oxidized by the anthrone oxygenase dmxR16 to yield emodin. Emodin is then reduced to emodin hydroquinone by the oxidoreductase dmxR7. A-ring reduction by the short chain dehydrogenase dmxR18, dehydration by the scytalone dehydratase-like protein dmxR17 and probable spontaneous re-oxidation, results in overall deoxygenation to chrysophanol. Baeyer-Villiger oxidation by the Baeyer-Villiger monooxygenase (BVMO) dmxR6 then yields monodictylactone in equilibrium with monodictyphenone. In the case of the cryptosporioptides biosynthesis, monodictylactone is reduced at C-12 to an alcohol (by the short chain dehydrogenases dmxR12 or dmxR8) and hydroxylated at C-5 by dmxR9, yielding the electron-rich aromatic which could eliminate H(2)O to form the ortho-quinonemethide, followed by tautomerisation to paraquinone and complete the formal reduction to produce the 10-methylgroup. Conjugate addition of C-4a-OH to the resulting paraquinone by the monooxygenase dmxR10 then gives cyclohexadienone, which is then reduced at C-5 by the short chain dehydrogenase dmxR3 to give the dihydroxanthone. The 6,7-epoxide in the cryptosporioptides could be introduced by the cytochrome P450 monooxygenase dmxL3. The highly reducing PKS dmxL2 manufactures butyrate, which is further carboxylated by dmxL1 to form ethylmalonate. It is not yet clear whether the carboxylation occurs while the butyrate is attached to the ACP of dmxL2, but this unusual fungal metabolite could then be esterified to O-5 by the O-acetyltransferase dmxR13. Finally, dimerization performed by dmxR5 gives the observed dimers cryptosporioptides A, B and C as the final products of the pathway. The chain is Short chain dehydrogenase/reductase dmxR8 from Cryptosporiopsis sp. (strain 8999).